We begin with the raw amino-acid sequence, 442 residues long: tRNA modification GTPase MnmE (442 aa).

3 residues coordinate (6S)-5-formyl-5,6,7,8-tetrahydrofolate: Arg27, Glu84, and Lys124. One can recognise a TrmE-type G domain in the interval 221–366 (GLHVVIVGAP…LLDALQAFAE (146 aa)). Residues 231-236 (NAGKSS), 250-256 (SEEAGTT), and 275-278 (DTAG) contribute to the GTP site. Positions 235 and 256 each coordinate Mg(2+). Lys442 is a (6S)-5-formyl-5,6,7,8-tetrahydrofolate binding site.

It belongs to the TRAFAC class TrmE-Era-EngA-EngB-Septin-like GTPase superfamily. TrmE GTPase family. Homodimer. Heterotetramer of two MnmE and two MnmG subunits. K(+) serves as cofactor.

It is found in the cytoplasm. In terms of biological role, exhibits a very high intrinsic GTPase hydrolysis rate. Involved in the addition of a carboxymethylaminomethyl (cmnm) group at the wobble position (U34) of certain tRNAs, forming tRNA-cmnm(5)s(2)U34. The sequence is that of tRNA modification GTPase MnmE from Brucella ovis (strain ATCC 25840 / 63/290 / NCTC 10512).